Here is a 425-residue protein sequence, read N- to C-terminus: Serine--tRNA ligase (425 aa).

Disordered regions lie at residues 43–69 (QRSS…SDPK) and 108–134 (LPNL…WGKP). The span at 117-134 (PEGRDENDNQERHRWGKP) shows a compositional bias: basic and acidic residues. 233–235 (TAE) contacts L-serine. 264-266 (RRE) is an ATP binding site. Glu287 provides a ligand contact to L-serine. 351–354 (EISS) contacts ATP. Position 385 (Ser385) interacts with L-serine.

It belongs to the class-II aminoacyl-tRNA synthetase family. Type-1 seryl-tRNA synthetase subfamily. In terms of assembly, homodimer. The tRNA molecule binds across the dimer.

It localises to the cytoplasm. It catalyses the reaction tRNA(Ser) + L-serine + ATP = L-seryl-tRNA(Ser) + AMP + diphosphate + H(+). The enzyme catalyses tRNA(Sec) + L-serine + ATP = L-seryl-tRNA(Sec) + AMP + diphosphate + H(+). It participates in aminoacyl-tRNA biosynthesis; selenocysteinyl-tRNA(Sec) biosynthesis; L-seryl-tRNA(Sec) from L-serine and tRNA(Sec): step 1/1. Its function is as follows. Catalyzes the attachment of serine to tRNA(Ser). Is also able to aminoacylate tRNA(Sec) with serine, to form the misacylated tRNA L-seryl-tRNA(Sec), which will be further converted into selenocysteinyl-tRNA(Sec). This chain is Serine--tRNA ligase, found in Prochlorococcus marinus (strain MIT 9313).